A 366-amino-acid chain; its full sequence is Box C/D snoRNA protein 1 (366 aa).

Positions 5, 8, 17, 20, 25, 29, 33, and 39 each coordinate Zn(2+). The segment at 5–39 adopts an HIT-type zinc-finger fold; sequence CGVCGIKEFKYKCPRCLVQTCSLECSKKHKTRDNC. The disordered stretch occupies residues 318–366; the sequence is DNAREEEDAEEDSQPTEEPVQKETQDASDSDSDSDDDYNPGLSMDFLTA. Composition is skewed to acidic residues over residues 321-332 and 343-355; these read REEEDAEEDSQP and DASDSDSDSDDDY. Ser330 is modified (phosphoserine).

The protein belongs to the BCD1 family.

The protein localises to the nucleus. In terms of biological role, required for box C/D snoRNAs accumulation involved in snoRNA processing, snoRNA transport to the nucleolus and ribosome biogenesis. The polypeptide is Box C/D snoRNA protein 1 (BCD1) (Saccharomyces cerevisiae (strain ATCC 204508 / S288c) (Baker's yeast)).